Here is a 1277-residue protein sequence, read N- to C-terminus: Neural cell adhesion molecule L1 (1277 aa).

The N-terminal stretch at 1–34 (MAHTQRQQGGSRGQWSRCLLLLLLLPLAAQPGRA) is a signal peptide. Topologically, residues 35 to 1135 (AIQIPSSYYI…VQPSFATQGW (1101 aa)) are extracellular. 5 consecutive Ig-like C2-type domains span residues 51 to 140 (PAIT…TAVS), 150 to 241 (PPVQ…EPIT), 256 to 344 (PQMM…YTVT), 349 to 437 (PYWT…TNVY), and 443 to 528 (PQIL…AEVE). Cystine bridges form between C72–C129, C173–C224, C280–C328, C370–C421, and C465–C514. A glycan (N-linked (GlcNAc...) asparagine) is linked at N317. N-linked (GlcNAc...) asparagine glycans are attached at residues N503, N520, and N531. In terms of domain architecture, Ig-like C2-type 6 spans 532–623 (RTVILSPPQA…DMVEASSTLT (92 aa)). C554 and C607 form a disulfide bridge. Fibronectin type-III domains follow at residues 630–725 (PPVH…TPAD), 730–824 (NPED…SGED), 829–931 (APLN…TPEG), 935–1030 (PPMS…TLEG), and 1032–1129 (PPAN…VQPS). The tract at residues 714-740 (SKLSDLYKTPADAPDSNPEDVRSESTD) is disordered. N794 and N839 each carry an N-linked (GlcNAc...) asparagine glycan. 5 N-linked (GlcNAc...) asparagine glycosylation sites follow: N1035, N1046, N1068, N1083, and N1108. A helical membrane pass occupies residues 1136-1156 (FIGVVSAVVLLLLVLLILCFI). Residues 1157-1277 (KRSKGGKYSV…ATNGAPSFLN (121 aa)) are Cytoplasmic-facing. 2 disordered regions span residues 1163-1216 (KYSV…LCSE) and 1232-1277 (NMDE…SFLN). A compositionally biased stretch (basic and acidic residues) spans 1165–1201 (SVKDKEDGPMDSEARPMKDETFGEYRSLESDLEEKRT). Positions 1232 to 1242 (NMDESLASQFS) are enriched in polar residues. Low complexity predominate over residues 1255–1277 (PDNSPLNPAANPPATNGAPSFLN).

Belongs to the immunoglobulin superfamily. L1/neurofascin/NgCAM family.

The protein resides in the cell membrane. The protein localises to the cell projection. It localises to the growth cone. Neural cell adhesion molecule involved in the dynamics of cell adhesion and in the generation of transmembrane signals at tyrosine kinase receptors. During brain development, critical in multiple processes, including neuronal migration, axonal growth and fasciculation, and synaptogenesis. In the mature brain, plays a role in the dynamics of neuronal structure and function, including synaptic plasticity. The sequence is that of Neural cell adhesion molecule L1 (l1cam) from Takifugu rubripes (Japanese pufferfish).